We begin with the raw amino-acid sequence, 333 residues long: Bacteriocin helveticin-J (333 aa).

Its function is as follows. This heat-sensitive bacteriocin inhibits the growth of closely related Lactobacillus species. The chain is Bacteriocin helveticin-J (hlv) from Lactobacillus helveticus (Lactobacillus suntoryeus).